The chain runs to 88 residues: Small ribosomal subunit protein bS20 (88 aa).

A disordered region spans residues 1 to 27; the sequence is MANTKQAQKRARQAEQRRQHNASQRSM.

Belongs to the bacterial ribosomal protein bS20 family.

Binds directly to 16S ribosomal RNA. The sequence is that of Small ribosomal subunit protein bS20 from Chromohalobacter salexigens (strain ATCC BAA-138 / DSM 3043 / CIP 106854 / NCIMB 13768 / 1H11).